The sequence spans 589 residues: Early growth response protein 4 (589 aa).

3 disordered regions span residues 29-101 (GSAL…HSRR), 383-411 (AEGL…ASTQ), and 436-466 (PGSS…GRRG). Residues 76-86 (PLPPASPPPAR) are compositionally biased toward pro residues. The segment covering 92 to 101 (ARPRAPHSRR) has biased composition (basic residues). Gly residues predominate over residues 395 to 404 (GEGGSSGDGG). Over residues 444–454 (PPVPPPPPTPF) the composition is skewed to pro residues. 3 consecutive C2H2-type zinc fingers follow at residues 483–507 (FACP…LRIH), 513–535 (FQCR…VRTH), and 541–563 (FACD…SKVH).

Belongs to the EGR C2H2-type zinc-finger protein family.

Its subcellular location is the nucleus. Transcriptional regulator. Recognizes and binds to the DNA sequence 5'-GCGGGGGCG-3' (GSG). Activates the transcription of target genes whose products are required for mitogenesis and differentiation. This Homo sapiens (Human) protein is Early growth response protein 4 (EGR4).